A 274-amino-acid polypeptide reads, in one-letter code: MGTLTVNQNKLQKRLRRQAGEAVADFNMIEEGDKVMVCLSGGKDSYTMLDVLLHLQKVAPIKFEIVAVNMDQKQPGFPEHVLPAYLKELGIEYHIVEKDTYSVVKELIPEGKTTCSLCSRLRRGTLYTFADEIGATKMALGHHRDDIVETFFLNMFYNGSLKAMPPKLLADDGRNVVIRPLAYCSEKDIQAYSDLKQFPIIPCNLCGSQENLQRQVVKEMLQEWERKTPGRTESIFRGLQNVIPSQLADRNLFDFTSLRIDDSATPRFVNVVNL.

Positions 40–45 (SGGKDS) match the PP-loop motif motif. [4Fe-4S] cluster-binding residues include cysteine 115, cysteine 118, and cysteine 206.

This sequence belongs to the TtcA family. As to quaternary structure, homodimer. The cofactor is Mg(2+). It depends on [4Fe-4S] cluster as a cofactor.

It is found in the cytoplasm. The enzyme catalyses cytidine(32) in tRNA + S-sulfanyl-L-cysteinyl-[cysteine desulfurase] + AH2 + ATP = 2-thiocytidine(32) in tRNA + L-cysteinyl-[cysteine desulfurase] + A + AMP + diphosphate + H(+). It participates in tRNA modification. Its function is as follows. Catalyzes the ATP-dependent 2-thiolation of cytidine in position 32 of tRNA, to form 2-thiocytidine (s(2)C32). The sulfur atoms are provided by the cysteine/cysteine desulfurase (IscS) system. This Pseudomonas fluorescens (strain ATCC BAA-477 / NRRL B-23932 / Pf-5) protein is tRNA-cytidine(32) 2-sulfurtransferase.